We begin with the raw amino-acid sequence, 638 residues long: Acetolactate synthase 1, chloroplastic (638 aa).

Residues 1 to 19 (MATAAAASTALTGATTAAP) are compositionally biased toward low complexity. Residues 1-23 (MATAAAASTALTGATTAAPKARR) form a disordered region. A chloroplast-targeting transit peptide spans 1–39 (MATAAAASTALTGATTAAPKARRRAHLLATRRALAAPIR). Residue E112 coordinates thiamine diphosphate. Residues C132 and C278 are joined by a disulfide bond. FAD is bound by residues R214, 320 to 341 (HGTV…LGVR), and 363 to 382 (DIDP…ICAD). Residues 455-535 (QHQMWAAQYY…VKVFVLNNQH (81 aa)) form a thiamine pyrophosphate binding region. 2 residues coordinate Mg(2+): D506 and N533.

It belongs to the TPP enzyme family. Requires Mg(2+) as cofactor. It depends on thiamine diphosphate as a cofactor.

It is found in the plastid. The protein localises to the chloroplast. The enzyme catalyses 2 pyruvate + H(+) = (2S)-2-acetolactate + CO2. Its pathway is amino-acid biosynthesis; L-isoleucine biosynthesis; L-isoleucine from 2-oxobutanoate: step 1/4. It functions in the pathway amino-acid biosynthesis; L-valine biosynthesis; L-valine from pyruvate: step 1/4. This is Acetolactate synthase 1, chloroplastic (ALS1) from Zea mays (Maize).